Here is a 617-residue protein sequence, read N- to C-terminus: MPAYRSRTTTHGRNMAGARALWRATGMKEGDFGKPIIAIANSFTQFVPGHVHLKDLGQLVAREIEKAGGVAKEFHTIAVDDGIAMGHSGMLYSLPSREIIADSVEYMVNAHCADALVCISNCDKITPGMLMAAMRLNIPAVFISGGPMEAGKVKIRGKSVSLDLVDAIVAAVDPAESDADVMAYERSACPTCGSCSGMFTANSMNCLTEALGLALPGNGSLLATHADRKELFLEAGRLIVALAKRYYEQDDETVLPRSIANFGAFENAMSLDIAMGGSTNTVLHLLAAAQEGGVDFTMADIDRLSRKVPNLCKVAPATPEYHMEDVHRAGGVISILGELDRAGLIHRQMATVHSPTLGAALDQWDIVRSSYEAAQSRYLAAPGGVPTQVAFSQGNRWESLDLDRAQGCIRDIAHAYSKDGGLAVLYGNLAKDGCIVKTAGVDPSILIFSGPARLFESQEAAIAAILGDKIQPGDVVLIRYEGPKGGPGMQEMLYPTSYLKSKGLGEVCALITDGRFSGGTSGLSIGHVSPEAAEGGTIGLVEEGDRIEIDIPHRRIHLAVDEEELAQRQRAMEAKAQQAWRPVNRNRTVSLALQAYAALTTSAAKGAVRDLGQLNRS.

Asp81 is a binding site for Mg(2+). Cys122 serves as a coordination point for [2Fe-2S] cluster. Positions 123 and 124 each coordinate Mg(2+). Lys124 carries the N6-carboxylysine modification. Cys195 lines the [2Fe-2S] cluster pocket. Mg(2+) is bound at residue Glu491. Catalysis depends on Ser517, which acts as the Proton acceptor.

Belongs to the IlvD/Edd family. In terms of assembly, homodimer. [2Fe-2S] cluster is required as a cofactor. Mg(2+) serves as cofactor.

The enzyme catalyses (2R)-2,3-dihydroxy-3-methylbutanoate = 3-methyl-2-oxobutanoate + H2O. It carries out the reaction (2R,3R)-2,3-dihydroxy-3-methylpentanoate = (S)-3-methyl-2-oxopentanoate + H2O. The protein operates within amino-acid biosynthesis; L-isoleucine biosynthesis; L-isoleucine from 2-oxobutanoate: step 3/4. It participates in amino-acid biosynthesis; L-valine biosynthesis; L-valine from pyruvate: step 3/4. Functions in the biosynthesis of branched-chain amino acids. Catalyzes the dehydration of (2R,3R)-2,3-dihydroxy-3-methylpentanoate (2,3-dihydroxy-3-methylvalerate) into 2-oxo-3-methylpentanoate (2-oxo-3-methylvalerate) and of (2R)-2,3-dihydroxy-3-methylbutanoate (2,3-dihydroxyisovalerate) into 2-oxo-3-methylbutanoate (2-oxoisovalerate), the penultimate precursor to L-isoleucine and L-valine, respectively. The polypeptide is Dihydroxy-acid dehydratase (Nitrosococcus oceani (strain ATCC 19707 / BCRC 17464 / JCM 30415 / NCIMB 11848 / C-107)).